A 254-amino-acid chain; its full sequence is PF03932 family protein CutC (254 aa).

The protein belongs to the CutC family.

It localises to the cytoplasm. This is PF03932 family protein CutC from Yersinia pestis bv. Antiqua (strain Antiqua).